The following is a 332-amino-acid chain: DNA packaging protein (332 aa).

The interval 1 to 207 (MDKSLFYNPQ…SERRKTRFGR (207 aa)) is ATPase. 24–31 (GARGIGKS) contacts ATP. The tract at residues 233-332 (KRSKDSKFVF…YELFRKMRIQ (100 aa)) is DNA-binding.

The protein belongs to the phi29likevirus gp16 family. Homopentamer. Interacts with the packaging RNA (pRNA). Part of a DNA-gp3-gp16 complex.

It carries out the reaction ATP + H2O = ADP + phosphate + H(+). Functionally, ATPase required for the genome encapsidation reaction. Part of the active packaging motor via the binding to the packaging RNA (pRNA), itself fixed to the head-tail connector at the unique portal vertex of the prohead. Binds and supercoils the pre-formed, unit-length DNA bound to gp3 to produce an initiation complex for DNA packaging. Provides the energy to actively pump the viral DNA into the prohead. Approximately one molecule of ATP is used in the packaging of 2 bp of viral DNA. ATP hydrolysis results in a conformational change that causes the arginine/lysine finger of one subunit to move into the active site of its neighbor, where it interacts with the negatively charged oxygens on the gamma-phosphate of ATP. After packaging, the ATPase and the pRNA are released from the prohead. The chain is DNA packaging protein (16) from Bacillus phage phi29 (Bacteriophage phi-29).